The primary structure comprises 245 residues: MNINVLTLFPEMFTPLQVSLLGRGQEDGKWKLNLVNFRDFSDRPHKSVDDTPYGGGAGMVLQVKPIKDALDSLENKGKVIITAPQGKTFNEQMAQEWSKEENLTFICGHFEGFDQRVYDLADEMVSIGDYVLTGGELPTMSMIDATVRLLPGILGNALSTVEESFSDGLLEYPQYTRPADFEGQKVPEVLLSGNHGKIDEWRHYQALKATKLHRPDLLEKRDLTPEEVRMLRQIREDEQAEEDKL.

S-adenosyl-L-methionine contacts are provided by residues Gly108 and 127-132 (IGDYVL).

The protein belongs to the RNA methyltransferase TrmD family. As to quaternary structure, homodimer.

It is found in the cytoplasm. The enzyme catalyses guanosine(37) in tRNA + S-adenosyl-L-methionine = N(1)-methylguanosine(37) in tRNA + S-adenosyl-L-homocysteine + H(+). In terms of biological role, specifically methylates guanosine-37 in various tRNAs. In Lactobacillus delbrueckii subsp. bulgaricus (strain ATCC 11842 / DSM 20081 / BCRC 10696 / JCM 1002 / NBRC 13953 / NCIMB 11778 / NCTC 12712 / WDCM 00102 / Lb 14), this protein is tRNA (guanine-N(1)-)-methyltransferase.